Reading from the N-terminus, the 116-residue chain is MNQVQAFEQSMIPETAVPKFGAGDTLKVHVKVVEGTRERIQVFEGVCIGRMNAGLRSTFTVRKISFGEGVERTFPVYSPRVDKIEVIRHGDVRRAKLYYLRGRTGKASRIKEKRDW.

The protein belongs to the bacterial ribosomal protein bL19 family.

In terms of biological role, this protein is located at the 30S-50S ribosomal subunit interface and may play a role in the structure and function of the aminoacyl-tRNA binding site. The polypeptide is Large ribosomal subunit protein bL19 (Magnetococcus marinus (strain ATCC BAA-1437 / JCM 17883 / MC-1)).